A 164-amino-acid polypeptide reads, in one-letter code: Peptide methionine sulfoxide reductase MsrA (164 aa).

Residue C16 is part of the active site.

This sequence belongs to the MsrA Met sulfoxide reductase family.

The enzyme catalyses L-methionyl-[protein] + [thioredoxin]-disulfide + H2O = L-methionyl-(S)-S-oxide-[protein] + [thioredoxin]-dithiol. It catalyses the reaction [thioredoxin]-disulfide + L-methionine + H2O = L-methionine (S)-S-oxide + [thioredoxin]-dithiol. In terms of biological role, has an important function as a repair enzyme for proteins that have been inactivated by oxidation. Catalyzes the reversible oxidation-reduction of methionine sulfoxide in proteins to methionine. This Methanoculleus marisnigri (strain ATCC 35101 / DSM 1498 / JR1) protein is Peptide methionine sulfoxide reductase MsrA.